A 229-amino-acid chain; its full sequence is Glycine betaine/carnitine/choline transport system permease protein OpuCD (229 aa).

The ABC transmembrane type-1 domain maps to 22–202; that stretch reads FYRHFLMSVY…LMAVIADLVM (181 aa). 5 consecutive transmembrane segments (helical) span residues 27–47, 55–74, 78–100, 148–168, and 182–202; these read LMSV…GILI, GWVF…AMLA, LVMG…LPII, ALVI…GGLG, and AIIL…DLVM.

Belongs to the binding-protein-dependent transport system permease family. CysTW subfamily. As to quaternary structure, the complex is composed of two ATP-binding proteins (OpuCA), two transmembrane proteins (OpuCB and OpuCD) and a solute-binding protein (OpuCC).

The protein localises to the cell membrane. In terms of biological role, involved in a high affinity multicomponent binding-protein-dependent transport system for glycine betaine, carnitine and choline; probably responsible for the translocation of the substrate across the membrane. This Bacillus subtilis (strain 168) protein is Glycine betaine/carnitine/choline transport system permease protein OpuCD (opuCD).